Reading from the N-terminus, the 298-residue chain is Interferon-inducible double-stranded RNA-dependent protein kinase activator A homolog B (298 aa).

3 consecutive DRBM domains span residues 20–87 (TPIQ…ILRG), 112–180 (NPVG…KFKT), and 225–293 (DYVK…YLKI).

It belongs to the PRKRA family. Homodimer. Interacts with dicer1 and eif2ak2/pkr. Also able to interact with dsRNA. Associates with ribosomes. Expressed in brain, heart, kidney, liver, nerve and spleen.

It is found in the cytoplasm. The protein localises to the perinuclear region. Its subcellular location is the nucleus. The protein resides in the nucleolus. Its function is as follows. Activates eif2ak2/pkr in the absence of double-stranded RNA (dsRNA), leading to phosphorylation of eif2s1/efi2-alpha and inhibition of translation and induction of apoptosis. Required for siRNA production by dicer1 and for subsequent siRNA-mediated post-transcriptional gene silencing. Does not seem to be required for processing of pre-miRNA to miRNA by dicer1. This is Interferon-inducible double-stranded RNA-dependent protein kinase activator A homolog B (prkra-b) from Xenopus laevis (African clawed frog).